The primary structure comprises 553 residues: Formate--tetrahydrofolate ligase 2 (553 aa).

63-70 (TSAGEGKS) contributes to the ATP binding site.

The protein belongs to the formate--tetrahydrofolate ligase family.

The catalysed reaction is (6S)-5,6,7,8-tetrahydrofolate + formate + ATP = (6R)-10-formyltetrahydrofolate + ADP + phosphate. Its pathway is one-carbon metabolism; tetrahydrofolate interconversion. The sequence is that of Formate--tetrahydrofolate ligase 2 from Lactobacillus acidophilus (strain ATCC 700396 / NCK56 / N2 / NCFM).